The chain runs to 79 residues: Short neurotoxin 2 (79 aa).

A signal peptide spans 1-19 (PLLLTLVVVTIVCLDLGYT). Disulfide bonds link cysteine 22/cysteine 41, cysteine 36/cysteine 58, cysteine 60/cysteine 71, and cysteine 72/cysteine 77.

The protein belongs to the three-finger toxin family. Short-chain subfamily. Type I alpha-neurotoxin sub-subfamily. As to expression, expressed by the venom gland.

Its subcellular location is the secreted. In terms of biological role, binds to muscle nicotinic acetylcholine receptor (nAChR) and inhibit acetylcholine from binding to the receptor, thereby impairing neuromuscular transmission. The polypeptide is Short neurotoxin 2 (Hydrophis cyanocinctus (Asian annulated sea snake)).